Consider the following 261-residue polypeptide: Kallikrein-2 (261 aa).

A signal peptide spans 1–18 (MWDLVLSIALSVGCTGAV). A propeptide spans 19-24 (PLIQSR) (activation peptide). The region spanning 25–258 (IVGGWECEKH…YRKWIKDTIA (234 aa)) is the Peptidase S1 domain. 5 cysteine pairs are disulfide-bonded: cysteine 31–cysteine 173, cysteine 50–cysteine 66, cysteine 152–cysteine 219, cysteine 184–cysteine 198, and cysteine 209–cysteine 234. Catalysis depends on histidine 65, which acts as the Charge relay system. N-linked (GlcNAc...) asparagine glycosylation is present at asparagine 102. Aspartate 120 (charge relay system) is an active-site residue. The Charge relay system role is filled by serine 213.

Belongs to the peptidase S1 family. Kallikrein subfamily.

The catalysed reaction is Preferential cleavage of Arg-|-Xaa bonds in small molecule substrates. Highly selective action to release kallidin (lysyl-bradykinin) from kininogen involves hydrolysis of Met-|-Xaa or Leu-|-Xaa.. In terms of biological role, glandular kallikreins cleave Met-Lys and Arg-Ser bonds in kininogen to release Lys-bradykinin. The sequence is that of Kallikrein-2 (KLK2) from Homo sapiens (Human).